Consider the following 171-residue polypeptide: Lipoprotein signal peptidase (171 aa).

3 helical membrane passes run 7-27 (GLIALLATLALDQASKLWLYF), 64-84 (LGRWLLVAVSLAAVIGLSVWM), and 88-108 (GSRLLAVALGLIVGGALGNAI). Catalysis depends on residues D118 and D136. The chain crosses the membrane as a helical span at residues 128–148 (SWYVFNVADAAIVAGVVGLIL).

Belongs to the peptidase A8 family.

It is found in the cell inner membrane. The catalysed reaction is Release of signal peptides from bacterial membrane prolipoproteins. Hydrolyzes -Xaa-Yaa-Zaa-|-(S,diacylglyceryl)Cys-, in which Xaa is hydrophobic (preferably Leu), and Yaa (Ala or Ser) and Zaa (Gly or Ala) have small, neutral side chains.. It functions in the pathway protein modification; lipoprotein biosynthesis (signal peptide cleavage). In terms of biological role, this protein specifically catalyzes the removal of signal peptides from prolipoproteins. The sequence is that of Lipoprotein signal peptidase from Methylorubrum extorquens (strain PA1) (Methylobacterium extorquens).